A 568-amino-acid polypeptide reads, in one-letter code: DNA mismatch repair protein MutL (568 aa).

Belongs to the DNA mismatch repair MutL/HexB family.

Its function is as follows. This protein is involved in the repair of mismatches in DNA. It is required for dam-dependent methyl-directed DNA mismatch repair. May act as a 'molecular matchmaker', a protein that promotes the formation of a stable complex between two or more DNA-binding proteins in an ATP-dependent manner without itself being part of a final effector complex. The chain is DNA mismatch repair protein MutL from Thermosipho africanus (strain TCF52B).